Consider the following 454-residue polypeptide: Bifunctional protein GlmU (454 aa).

The interval Met-1–Lys-228 is pyrophosphorylase. UDP-N-acetyl-alpha-D-glucosamine contacts are provided by residues Leu-8–Gly-11, Lys-22, Gln-73, Gly-78–Thr-79, Tyr-100–Asp-102, Gly-138, Glu-153, Asn-168, and Asn-226. Asp-102 is a binding site for Mg(2+). Residue Asn-226 participates in Mg(2+) binding. Positions Ser-229–Gln-249 are linker. The segment at Gly-250–Asn-454 is N-acetyltransferase. Positions 332 and 350 each coordinate UDP-N-acetyl-alpha-D-glucosamine. The Proton acceptor role is filled by His-362. The UDP-N-acetyl-alpha-D-glucosamine site is built by Tyr-365 and Asn-376. Acetyl-CoA-binding positions include Ala-379, Asn-385–Tyr-386, Ser-404, Ala-422, and Arg-439.

The protein in the N-terminal section; belongs to the N-acetylglucosamine-1-phosphate uridyltransferase family. In the C-terminal section; belongs to the transferase hexapeptide repeat family. As to quaternary structure, homotrimer. It depends on Mg(2+) as a cofactor.

Its subcellular location is the cytoplasm. It carries out the reaction alpha-D-glucosamine 1-phosphate + acetyl-CoA = N-acetyl-alpha-D-glucosamine 1-phosphate + CoA + H(+). It catalyses the reaction N-acetyl-alpha-D-glucosamine 1-phosphate + UTP + H(+) = UDP-N-acetyl-alpha-D-glucosamine + diphosphate. Its pathway is nucleotide-sugar biosynthesis; UDP-N-acetyl-alpha-D-glucosamine biosynthesis; N-acetyl-alpha-D-glucosamine 1-phosphate from alpha-D-glucosamine 6-phosphate (route II): step 2/2. The protein operates within nucleotide-sugar biosynthesis; UDP-N-acetyl-alpha-D-glucosamine biosynthesis; UDP-N-acetyl-alpha-D-glucosamine from N-acetyl-alpha-D-glucosamine 1-phosphate: step 1/1. It participates in bacterial outer membrane biogenesis; LPS lipid A biosynthesis. Its function is as follows. Catalyzes the last two sequential reactions in the de novo biosynthetic pathway for UDP-N-acetylglucosamine (UDP-GlcNAc). The C-terminal domain catalyzes the transfer of acetyl group from acetyl coenzyme A to glucosamine-1-phosphate (GlcN-1-P) to produce N-acetylglucosamine-1-phosphate (GlcNAc-1-P), which is converted into UDP-GlcNAc by the transfer of uridine 5-monophosphate (from uridine 5-triphosphate), a reaction catalyzed by the N-terminal domain. The sequence is that of Bifunctional protein GlmU from Hydrogenovibrio crunogenus (strain DSM 25203 / XCL-2) (Thiomicrospira crunogena).